We begin with the raw amino-acid sequence, 302 residues long: Sulfate adenylyltransferase subunit 2 (302 aa).

Residues 280 to 302 (RQGRAIDHDQSGSMELKKRQGYF) are disordered.

It belongs to the PAPS reductase family. CysD subfamily. As to quaternary structure, heterodimer composed of CysD, the smaller subunit, and CysN.

The enzyme catalyses sulfate + ATP + H(+) = adenosine 5'-phosphosulfate + diphosphate. The protein operates within sulfur metabolism; hydrogen sulfide biosynthesis; sulfite from sulfate: step 1/3. Functionally, with CysN forms the ATP sulfurylase (ATPS) that catalyzes the adenylation of sulfate producing adenosine 5'-phosphosulfate (APS) and diphosphate, the first enzymatic step in sulfur assimilation pathway. APS synthesis involves the formation of a high-energy phosphoric-sulfuric acid anhydride bond driven by GTP hydrolysis by CysN coupled to ATP hydrolysis by CysD. This is Sulfate adenylyltransferase subunit 2 from Vibrio vulnificus (strain CMCP6).